Consider the following 214-residue polypeptide: Cytochrome b (214 aa).

4 helical membrane-spanning segments follow: residues 31–51 (FGSM…FLAI), 75–96 (WIMQ…YIHI), 111–131 (WLSG…GYVL), and 176–196 (FFAL…IHIL). Histidine 81 and histidine 95 together coordinate heme b. Heme b is bound by residues histidine 180 and histidine 194. Histidine 199 contributes to the a ubiquinone binding site.

This sequence belongs to the cytochrome b family. In terms of assembly, the cytochrome bc1 complex contains 3 respiratory subunits (MT-CYB, CYC1 and UQCRFS1), 2 core proteins (UQCRC1 and UQCRC2) and probably 6 low-molecular weight proteins. Requires heme b as cofactor.

The protein localises to the mitochondrion inner membrane. In terms of biological role, component of the ubiquinol-cytochrome c reductase complex (complex III or cytochrome b-c1 complex) that is part of the mitochondrial respiratory chain. The b-c1 complex mediates electron transfer from ubiquinol to cytochrome c. Contributes to the generation of a proton gradient across the mitochondrial membrane that is then used for ATP synthesis. The chain is Cytochrome b (MT-CYB) from Bothrops atrox (Barba amarilla).